The following is a 1059-amino-acid chain: MDMLMMWSICLFVCIFMAPFSCGSGSSSRFIQVPESQSIVENDSVDFNCEATTDPSTDLHYEWLHNGHQIVYDKRVYQIGANLHIESVQRGEDVGDYVCIAMSLSSGAREASPTAKLSVIFLDSASVQLLGSNRNELLLKCHVEGASGNEALQIEWYRNSAKLSSWQNIELDEHRLLVRQPTGSDDGLYRCIASNAAGRVMSKQGFVYQHQQQQQAGAKCLPRLKKNQKFLPESWGKQIFLCRGKRGGNVEAGLAPSPEGLRLVQGPDDQITIKEGEPATLSCLYEIPAELQNQRIQLRWRKDGKLLRQVELGASLPRGMGNPHNGHSLDGKDALLREDARLVLHKANGTLSFGTVIASDAGQYQCQLQMEGHLAINSSPGILEVIEQLKFMPQPTSKNLELDAAVAKVHCKAQGTPTPQVQWFRDGVNTTLPDQVEVDLNGTLIFRNVNADHRGNYTCLATNLQGQINATVSINVVVAPKFSVPPNVPMEIAEQSTVVIHCQAIGDPKPTIQWDKDLLYLSENNTDRQRFSFLENGTLEIRNVQAEDEGRYGCTIGNSAGLKREEAVLTVKTSSTGGGGYVTEESSGDGGFLATRAVLITMTVALAYIVLVVGLMLWCRYRRQARKARLNELSIKEAGGEQAGGEGSTSGNPKASEQEPCLGKQQRNGRNGKSKSNGDPQKSDDTACSQQSRASKKSAHIYEQLALPRSGLSELIQIGRGDFGDVFVGKLKASLVNNAQANDKDSDNDKQHSNSENGSGGSSGSTTLSTLNEKRRSKTSMDDIEEIKEEEQEQQQSQQQQQQDQLVMVKALNKVKDEQACQEFRRQLDLLRALSHKGIVRLYGLCREKDPHYLVLEYTDWGDLKQFLLATAGKVNTATTATSSTTPLPPLTTSQVLAVAYQIARGMDAIYRARFTHRDLATRNCVISSEFIVKVSYPALCKDKYSREYHKHRNSLLPIRWLAPECIQEDEYTTKSDIFSYGVVVWELFNQATKLPHEDLTNEQVIEKSQDGTLKWTVAESTPESLKEILLSCWSVNPKQRPSFSQLGAALSKAMQNSE.

Positions 1–23 are cleaved as a signal peptide; that stretch reads MDMLMMWSICLFVCIFMAPFSCG. The Extracellular segment spans residues 24–597; it reads SGSSSRFIQV…GDGGFLATRA (574 aa). 5 Ig-like C2-type domains span residues 28–112, 113–202, 258–377, 380–475, and 480–570; these read SRFI…REAS, PTAK…RVMS, PEGL…LAIN, PGIL…VSIN, and PKFS…AVLT. N-linked (GlcNAc...) asparagine glycosylation is present at Asn-42. 4 cysteine pairs are disulfide-bonded: Cys-49/Cys-99, Cys-141/Cys-191, Cys-283/Cys-366, and Cys-411/Cys-459. N-linked (GlcNAc...) asparagine glycans are attached at residues Asn-348, Asn-429, Asn-441, Asn-456, Asn-469, Asn-524, and Asn-536. Cysteines 502 and 554 form a disulfide. The chain crosses the membrane as a helical span at residues 598–618; sequence VLITMTVALAYIVLVVGLMLW. The Cytoplasmic portion of the chain corresponds to 619–1059; the sequence is CRYRRQARKA…ALSKAMQNSE (441 aa). Residues 639-695 form a disordered region; that stretch reads GGEQAGGEGSTSGNPKASEQEPCLGKQQRNGRNGKSKSNGDPQKSDDTACSQQSRAS. A compositionally biased stretch (polar residues) spans 665-693; that stretch reads QQRNGRNGKSKSNGDPQKSDDTACSQQSR. Ser-698 bears the Phosphoserine mark. The region spanning 712–1055 is the Protein kinase; inactive domain; that stretch reads LSELIQIGRG…QLGAALSKAM (344 aa). The interval 739-781 is disordered; the sequence is AQANDKDSDNDKQHSNSENGSGGSSGSTTLSTLNEKRRSKTSM. The span at 742–753 shows a compositional bias: basic and acidic residues; the sequence is NDKDSDNDKQHS.

This sequence belongs to the protein kinase superfamily. Tyr protein kinase family. Insulin receptor subfamily. Interacts with plexA; component of a receptor complex that mediates the repulsive signaling in response to Semaphorin ligands.

It localises to the cell membrane. Acts as a calcium-dependent, homophilic cell adhesion molecule that regulates neural recognition during the development of the nervous system. Component of the repulsive Plexin signaling response to regulate motor axon guidance at the embryonic stage. Also component of a receptor complex that is required in the adult visual system to innervate the lamina layer; specific targeting of R1-R6 axons. The protein is Tyrosine-protein kinase-like otk of Drosophila willistoni (Fruit fly).